Consider the following 183-residue polypeptide: UPF0200 protein MmarC6_1392 (183 aa).

8–15 (GMPGSGKS) is an ATP binding site.

This sequence belongs to the UPF0200 family.

The protein is UPF0200 protein MmarC6_1392 of Methanococcus maripaludis (strain C6 / ATCC BAA-1332).